Here is a 411-residue protein sequence, read N- to C-terminus: Imidazolonepropionase (411 aa).

Residues His-78 and His-80 each contribute to the Fe(3+) site. Zn(2+) is bound by residues His-78 and His-80. Arg-87, Tyr-150, and His-183 together coordinate 4-imidazolone-5-propanoate. An N-formimidoyl-L-glutamate-binding site is contributed by Tyr-150. His-248 serves as a coordination point for Fe(3+). His-248 contacts Zn(2+). Gln-251 is a binding site for 4-imidazolone-5-propanoate. Residue Asp-322 participates in Fe(3+) binding. Asp-322 is a Zn(2+) binding site. 2 residues coordinate N-formimidoyl-L-glutamate: Asn-324 and Gly-326. Residue Ser-327 participates in 4-imidazolone-5-propanoate binding.

The protein belongs to the metallo-dependent hydrolases superfamily. HutI family. Zn(2+) serves as cofactor. Fe(3+) is required as a cofactor.

It localises to the cytoplasm. The enzyme catalyses 4-imidazolone-5-propanoate + H2O = N-formimidoyl-L-glutamate. Its pathway is amino-acid degradation; L-histidine degradation into L-glutamate; N-formimidoyl-L-glutamate from L-histidine: step 3/3. Functionally, catalyzes the hydrolytic cleavage of the carbon-nitrogen bond in imidazolone-5-propanoate to yield N-formimidoyl-L-glutamate. It is the third step in the universal histidine degradation pathway. This is Imidazolonepropionase from Flavobacterium johnsoniae (strain ATCC 17061 / DSM 2064 / JCM 8514 / BCRC 14874 / CCUG 350202 / NBRC 14942 / NCIMB 11054 / UW101) (Cytophaga johnsonae).